A 313-amino-acid chain; its full sequence is Protein-methionine-sulfoxide reductase catalytic subunit MsrP (313 aa).

Positions methionine 1 to alanine 44 form a signal peptide, tat-type signal. Mo-molybdopterin-binding positions include asparagine 76, tyrosine 79–glutamate 80, cysteine 134, threonine 169, asparagine 217, arginine 222, and glycine 233–lysine 235.

It belongs to the MsrP family. Heterodimer of a catalytic subunit (MsrP) and a heme-binding subunit (MsrQ). Mo-molybdopterin serves as cofactor. Post-translationally, predicted to be exported by the Tat system. The position of the signal peptide cleavage has not been experimentally proven.

The protein localises to the periplasm. It carries out the reaction L-methionyl-[protein] + a quinone + H2O = L-methionyl-(S)-S-oxide-[protein] + a quinol. The enzyme catalyses L-methionyl-[protein] + a quinone + H2O = L-methionyl-(R)-S-oxide-[protein] + a quinol. Functionally, part of the MsrPQ system that repairs oxidized periplasmic proteins containing methionine sulfoxide residues (Met-O), using respiratory chain electrons. Thus protects these proteins from oxidative-stress damage caused by reactive species of oxygen and chlorine generated by the host defense mechanisms. MsrPQ is essential for the maintenance of envelope integrity under bleach stress, rescuing a wide series of structurally unrelated periplasmic proteins from methionine oxidation. The catalytic subunit MsrP is non-stereospecific, being able to reduce both (R-) and (S-) diastereoisomers of methionine sulfoxide. The protein is Protein-methionine-sulfoxide reductase catalytic subunit MsrP of Anaeromyxobacter sp. (strain K).